The sequence spans 100 residues: Large ribosomal subunit protein uL23 (100 aa).

This sequence belongs to the universal ribosomal protein uL23 family. As to quaternary structure, part of the 50S ribosomal subunit. Contacts protein L29, and trigger factor when it is bound to the ribosome.

In terms of biological role, one of the early assembly proteins it binds 23S rRNA. One of the proteins that surrounds the polypeptide exit tunnel on the outside of the ribosome. Forms the main docking site for trigger factor binding to the ribosome. This Vibrio atlanticus (strain LGP32) (Vibrio splendidus (strain Mel32)) protein is Large ribosomal subunit protein uL23.